We begin with the raw amino-acid sequence, 302 residues long: Negative regulator of the PHO system (302 aa).

The Protein kinase domain maps to 6–296 (FKQLEKLGNG…AKQALLHPWF (291 aa)). ATP-binding positions include 12–20 (LGNGTYATV) and lysine 35. Catalysis depends on aspartate 132, which acts as the Proton acceptor.

The protein belongs to the protein kinase superfamily. CMGC Ser/Thr protein kinase family. CDC2/CDKX subfamily. In terms of assembly, interacts with a number of cyclins.

It carries out the reaction L-seryl-[protein] + ATP = O-phospho-L-seryl-[protein] + ADP + H(+). The enzyme catalyses L-threonyl-[protein] + ATP = O-phospho-L-threonyl-[protein] + ADP + H(+). Its function is as follows. When phosphate concentrations are high it phosphorylates the PHO4 transcription factor thus establishing repression. This chain is Negative regulator of the PHO system (PHO85), found in Candida glabrata (strain ATCC 2001 / BCRC 20586 / JCM 3761 / NBRC 0622 / NRRL Y-65 / CBS 138) (Yeast).